The sequence spans 150 residues: Translation machinery-associated protein 17 (150 aa).

Phosphoserine is present on residues Ser24 and Ser68. The disordered stretch occupies residues 110–139; that stretch reads RKTGHGKSKHEVEAKDNTNKGPDVDMDNSN. Positions 118-127 are enriched in basic and acidic residues; that stretch reads KHEVEAKDNT.

As to quaternary structure, interacts with RPT6. Interacts with the 40S and 60S ribosomal subunits.

The protein localises to the cytoplasm. The protein resides in the nucleus. Its function is as follows. ATPase-dedicated chaperone that assists the formation of the RPT6-RPT3 ATPase pair, an early step in proteasome assembly. Plays a key role in maintaining homeostatic proteasome levels and adjusting proteasome assembly when demands increase, such as during proteasome stresses. Function overlaps with RPN14. The sequence is that of Translation machinery-associated protein 17 (TMA17) from Saccharomyces cerevisiae (strain ATCC 204508 / S288c) (Baker's yeast).